Consider the following 80-residue polypeptide: Serine palmitoyltransferase small subunit A-B (80 aa).

The Cytoplasmic portion of the chain corresponds to 1–21 (MKVSCEDVNGPRSSLGRAWNH). The chain crosses the membrane as a helical span at residues 22-38 (VSWLYYQYLLVTALYML). The Lumenal portion of the chain corresponds to 39–43 (EPWER). The helical transmembrane segment at 44-66 (TVFNSMLVSIVGMALYTGYIFMP) threads the bilayer. The Cytoplasmic portion of the chain corresponds to 67 to 80 (QHILAILHYFEIVQ).

It belongs to the SPTSS family. SPTSSA subfamily. As to quaternary structure, component of the serine palmitoyltransferase (SPT) complex, which is composed of SPTLC1, SPTLC2 or SPTLC3 and SPTSSA or SPTSSB. The heterodimer consisting of SPTLC1 and SPTLC2/SPTLC3 forms the catalytic core of the enzyme, while SPTSSA or SPTSSB subunits determine substrate specificity. SPT also interacts with ORMDL proteins, especially ORMDL3, which negatively regulate SPT activity in the presence of ceramides.

It localises to the endoplasmic reticulum membrane. The protein operates within lipid metabolism; sphingolipid metabolism. In terms of biological role, component of the serine palmitoyltransferase multisubunit enzyme (SPT) that catalyzes the initial and rate-limiting step in sphingolipid biosynthesis by condensing L-serine and activated acyl-CoA (most commonly palmitoyl-CoA) to form long-chain bases. The SPT complex is composed of SPTLC1, SPTLC2 or SPTLC3 and SPTSSA or SPTSSB. Within this complex, the heterodimer consisting of SPTLC1 and SPTLC2/SPTLC3 forms the catalytic core. Within the SPT complex, SPTSSA stimulates the catalytic activity and plays a role in substrate specificity, which depends upon the overall complex composition. The SPTLC1-SPTLC2-SPTSSA complex shows a strong preference for C16-CoA substrate, while the SPTLC1-SPTLC3-SPTSSA isozyme uses both C14-CoA and C16-CoA as substrates, with a slight preference for C14-CoA. Independently of its action as a SPT component, may be involved in MBOAT7 localization to mitochondria-associated membranes, a membrane bridge between the endoplasmic reticulum and mitochondria, may hence affect MBOAT7-catalyzed incorporation of arachidonic acid into phosphatidylinositol. The protein is Serine palmitoyltransferase small subunit A-B (sptssa-b) of Xenopus laevis (African clawed frog).